Here is a 172-residue protein sequence, read N- to C-terminus: MEEHLAVMHERLRQELPTLFLRSHDYTIYSMDVEFINEILNVRTKGRTFYVMSLTLCRFLAWNYFAQFRLEILQLTRHPENWTLQARWRLIGLPVHMLFLRFYRRDKEDLYRTFDAFSTFYLNSSGLICRHHLDKLMPSHSPSTPVKKLLVGALVALGLSEPEPSLHLCSKT.

This is an uncharacterized protein from Rattus norvegicus (Rat).